The chain runs to 145 residues: Maximins 3/H9 type 1 (145 aa).

The signal sequence occupies residues 1–18; it reads MNFKYIVAVSFLIASAYA. 2 propeptides span residues 19–43 and 74–124; these read RSVQ…LREI and RTAE…KEKR. I144 bears the Isoleucine amide mark.

It belongs to the bombinin family. As to expression, expressed by the skin glands.

It localises to the secreted. Its function is as follows. Maximin-3 shows antibacterial activity against both Gram-positive and Gram-negative bacteria. It also shows antimicrobial activity against the fungus C.albicans, but not against A.flavus nor P.uticale. It has little hemolytic activity. It possess a significant cytotoxicity against tumor cell lines. It possess a significant anti-HIV activity. It shows high spermicidal activity. In terms of biological role, maximin-H9 shows antimicrobial activity against bacteria and against the fungus C.albicans. Shows strong hemolytic activity. The polypeptide is Maximins 3/H9 type 1 (Bombina maxima (Giant fire-bellied toad)).